Consider the following 600-residue polypeptide: Probable translation initiation factor IF-2 (600 aa).

Positions 10 to 227 (LRQPIVVVLG…LLAGLTQRYL (218 aa)) constitute a tr-type G domain. A G1 region spans residues 19 to 26 (GHVDHGKT). Residue 19 to 26 (GHVDHGKT) participates in GTP binding. Residues 44-48 (EMTQE) form a G2 region. The tract at residues 83 to 86 (DTPG) is G3. Residues 83-87 (DTPGH) and 137-140 (NKID) each bind GTP. The segment at 137-140 (NKID) is G4. Positions 205-207 (SAK) are G5.

This sequence belongs to the TRAFAC class translation factor GTPase superfamily. Classic translation factor GTPase family. IF-2 subfamily.

Functionally, function in general translation initiation by promoting the binding of the formylmethionine-tRNA to ribosomes. Seems to function along with eIF-2. The chain is Probable translation initiation factor IF-2 from Saccharolobus solfataricus (strain ATCC 35092 / DSM 1617 / JCM 11322 / P2) (Sulfolobus solfataricus).